The following is a 483-amino-acid chain: Probable 4-hydroxyphenylacetate 3-monooxygenase (483 aa).

Residues 104-108 (RSPDY) and histidine 150 contribute to the substrate site. FAD contacts are provided by residues 150 to 152 (HTF), 156 to 159 (QVNR), and threonine 193. Residue 206 to 207 (AP) participates in substrate binding. 452–455 (DPIR) lines the FAD pocket.

The protein belongs to the FADH(2)-utilizing monooxygenase family.

It catalyses the reaction 4-hydroxyphenylacetate + FADH2 + O2 = 3,4-dihydroxyphenylacetate + FAD + H2O + H(+). It functions in the pathway aromatic compound metabolism; 4-hydroxyphenylacetate degradation; pyruvate and succinate semialdehyde from 4-hydroxyphenylacetate: step 1/7. Its function is as follows. Catalyzes the hydroxylation of 4-hydroxyphenylacetic acid (4HPA), leading to the production of 3,4-dihydroxyphenylacetic acid (DHPA). This chain is Probable 4-hydroxyphenylacetate 3-monooxygenase (yoaI), found in Bacillus subtilis (strain 168).